The sequence spans 904 residues: E3 ubiquitin-protein ligase ZNF598 (904 aa).

The RING-type zinc-finger motif lies at 29-69 (CVLCCGDLEATALGRCDHPVCYRCSTKMRVLCEQRYCAVCR). The C2H2-type zinc finger occupies 187–210 (PLCKFCDERYLDNDELLKHLRRDH). A Phosphotyrosine modification is found at Tyr-306. 2 disordered regions span residues 312-469 (YSRQ…GLAL) and 490-656 (VSSV…LPRP). Residues 346-358 (AAAVRASVAAQQQ) are compositionally biased toward low complexity. Over residues 359–388 (EEARRSEDQEEGGRPKKEEAAARGPEDPRG) the composition is skewed to basic and acidic residues. Residues 404–416 (ETSTNGPVSQEAF) show a composition bias toward polar residues. Over residues 418–431 (VTGPAAPGCVGVPG) the composition is skewed to low complexity. A phosphoserine mark is found at Gly-428, Gly-431, and Ser-437. Low complexity-rich tracts occupy residues 447 to 461 (SLSASTSSSCSTAAT) and 502 to 513 (SLVSAWNSSSSS). Positions 521–531 (LSAQATGSGQP) are enriched in polar residues. Basic residues predominate over residues 534–543 (KAGKGSRGGR). Residues 564-584 (LLSTRPTGSVSSTLGLASIQP) are compositionally biased toward polar residues.

It belongs to the ZNF598/HEL2 family. As to quaternary structure, interacts with the E2 ubiquitin-conjugating enzyme UBE2D3. Component of the 4EHP-GYF2 complex, at least composed of EIF4E2, GIGYF2 and ZNF598.

It localises to the cytoplasm. It is found in the cytosol. The catalysed reaction is S-ubiquitinyl-[E2 ubiquitin-conjugating enzyme]-L-cysteine + [acceptor protein]-L-lysine = [E2 ubiquitin-conjugating enzyme]-L-cysteine + N(6)-ubiquitinyl-[acceptor protein]-L-lysine.. It participates in protein modification; protein ubiquitination. Functionally, E3 ubiquitin-protein ligase that plays a key role in the ribosome quality control (RQC), a pathway that takes place when a ribosome has stalled during translation, leading to degradation of nascent peptide chains. ZNF598 is activated when ribosomes are stalled within an mRNA following translation of prematurely polyadenylated mRNAs. Acts as a ribosome collision sensor: specifically recognizes and binds collided di-ribosome, which arises when a trailing ribosome encounters a slower leading ribosome, leading to terminally arrest translation. Following binding to colliding ribosomes, mediates monoubiquitination of 40S ribosomal proteins RPS10/eS10 and RPS3/uS3, and 'Lys-63'-linked polyubiquitination of RPS20/uS10. Polyubiquitination of RPS20/uS10 promotes recruitment of the RQT (ribosome quality control trigger) complex, which drives the disassembly of stalled ribosomes, followed by degradation of nascent peptides. E3 ubiquitin-protein ligase activity is dependent on the E2 ubiquitin-conjugating enzyme UBE2D3. Also acts as an adapter that recruits the 4EHP-GYF2 complex to mRNAs. Independently of its role in RQC, may also act as a negative regulator of interferon-stimulated gene (ISG) expression. Its function is as follows. (Microbial infection) Required for poxvirus protein synthesis by mediating ubiquitination of RPS10/eS10 and RPS20/uS10. Poxvirus encoding mRNAs contain unusual 5' poly(A) leaders and ZNF598 is required for their translational efficiency, possibly via its ability to suppress readthrough or sliding on shorter poly(A) tracts. In Homo sapiens (Human), this protein is E3 ubiquitin-protein ligase ZNF598.